The following is a 526-amino-acid chain: Collagen alpha-2(I) chain (526 aa).

The tract at residues 1 to 291 is disordered; it reads GFPGEKGPSG…PRSPPSLRPK (291 aa). Composition is skewed to low complexity over residues 9 to 36, 44 to 81, and 110 to 131; these read SGEA…LGLP, LPGV…NGAP, and YPGN…SVGP. Positions 165–176 are enriched in basic and acidic residues; it reads RGDKGEPGDKGP. The span at 249–261 shows a compositional bias: pro residues; that stretch reads AGPPGPPGPPGPP. Positions 263–526 are cleaved as a propeptide — C-terminal propeptide; the sequence is ASGGGYDFGY…YVDVGPVCFK (264 aa). The Fibrillar collagen NC1 domain maps to 293–526; that stretch reads YEVDATLKSL…YVDVGPVCFK (234 aa). Disulfide bonds link cysteine 323–cysteine 355, cysteine 363–cysteine 524, and cysteine 432–cysteine 477. Residues aspartate 341, asparagine 343, glutamine 344, cysteine 346, and aspartate 349 each coordinate Ca(2+).

Belongs to the fibrillar collagen family. As to quaternary structure, trimers of one alpha 2(I) and two alpha 1(I) chains. Interacts (via C-terminus) with TMEM131 (via PapD-L domain); the interaction is direct and is involved in assembly and TRAPPIII ER-to-Golgi transport complex-dependent secretion of collagen. Prolines at the third position of the tripeptide repeating unit (G-X-Y) are hydroxylated in some or all of the chains. As to expression, forms the fibrils of tendon, ligaments and bones. In bones the fibrils are mineralized with calcium hydroxyapatite.

Its subcellular location is the secreted. The protein localises to the extracellular space. It localises to the extracellular matrix. Type I collagen is a member of group I collagen (fibrillar forming collagen). The chain is Collagen alpha-2(I) chain (COL1A2) from Oryctolagus cuniculus (Rabbit).